The sequence spans 379 residues: Chaperone protein DnaJ (379 aa).

Residues 5–69 enclose the J domain; it reads EYYERLGVDK…QKRAAYDQYG (65 aa). The CR-type zinc finger occupies 141–223; the sequence is GVEKQVKYNR…CHGSGHEKVA (83 aa). Zn(2+) is bound by residues Cys154, Cys157, Cys171, Cys174, Cys197, Cys200, Cys211, and Cys214. CXXCXGXG motif repeat units follow at residues 154-161, 171-178, 197-204, and 211-218; these read CHTCGGSG, CHKCGGRG, CDVCHGTG, and CTTCHGSG.

This sequence belongs to the DnaJ family. In terms of assembly, homodimer. Requires Zn(2+) as cofactor.

Its subcellular location is the cytoplasm. Functionally, participates actively in the response to hyperosmotic and heat shock by preventing the aggregation of stress-denatured proteins and by disaggregating proteins, also in an autonomous, DnaK-independent fashion. Unfolded proteins bind initially to DnaJ; upon interaction with the DnaJ-bound protein, DnaK hydrolyzes its bound ATP, resulting in the formation of a stable complex. GrpE releases ADP from DnaK; ATP binding to DnaK triggers the release of the substrate protein, thus completing the reaction cycle. Several rounds of ATP-dependent interactions between DnaJ, DnaK and GrpE are required for fully efficient folding. Also involved, together with DnaK and GrpE, in the DNA replication of plasmids through activation of initiation proteins. This is Chaperone protein DnaJ from Lactococcus lactis subsp. cremoris (strain MG1363).